A 330-amino-acid polypeptide reads, in one-letter code: Trans-1,2-dihydrobenzene-1,2-diol dehydrogenase (330 aa).

The protein belongs to the Gfo/Idh/MocA family. Homodimer.

It catalyses the reaction (1R,2R)-1,2-dihydrobenzene-1,2-diol + NADP(+) = catechol + NADPH + H(+). It carries out the reaction D-xylose + NADP(+) = D-xylono-1,5-lactone + NADPH + H(+). This is Trans-1,2-dihydrobenzene-1,2-diol dehydrogenase (dhdh) from Xenopus tropicalis (Western clawed frog).